Here is a 200-residue protein sequence, read N- to C-terminus: Small ribosomal subunit protein uS4 (200 aa).

Residues 92–155 form the S4 RNA-binding domain; sequence SRLDAVVYSL…QKLNIIVESV (64 aa).

Belongs to the universal ribosomal protein uS4 family. As to quaternary structure, part of the 30S ribosomal subunit. Contacts protein S5. The interaction surface between S4 and S5 is involved in control of translational fidelity.

Functionally, one of the primary rRNA binding proteins, it binds directly to 16S rRNA where it nucleates assembly of the body of the 30S subunit. Its function is as follows. With S5 and S12 plays an important role in translational accuracy. This chain is Small ribosomal subunit protein uS4, found in Staphylococcus aureus (strain JH9).